The chain runs to 306 residues: Protein pxr1 (306 aa).

Residues 1 to 11 (MGLAAPRKRTK) are compositionally biased toward basic residues. Disordered stretches follow at residues 1-27 (MGLAAPRKRTKISHDPNNTNWSRSTSG) and 148-241 (AQKE…SDIP). Residues 15 to 27 (DPNNTNWSRSTSG) are compositionally biased toward polar residues. The region spanning 25–79 (TSGYGHKIMSSQGWTPGSFLGARNAAHADMFTAASASHIRVVVKDDTLGLGARSK) is the G-patch domain. Basic and acidic residues predominate over residues 182–191 (NTLKALREEQ). Residues 219–228 (KKERKTKKRK) show a composition bias toward basic residues.

Belongs to the PINX1 family.

It is found in the nucleus. It localises to the nucleolus. Involved in rRNA-processing at A0, A1 and A2 sites and negatively regulates telomerase. In Aspergillus oryzae (strain ATCC 42149 / RIB 40) (Yellow koji mold), this protein is Protein pxr1 (pxr1).